Consider the following 151-residue polypeptide: Flagellar assembly factor FliW (151 aa).

Belongs to the FliW family. As to quaternary structure, interacts with translational regulator CsrA and flagellin(s).

It is found in the cytoplasm. In terms of biological role, acts as an anti-CsrA protein, binds CsrA and prevents it from repressing translation of its target genes, one of which is flagellin. Binds to flagellin and participates in the assembly of the flagellum. This Natranaerobius thermophilus (strain ATCC BAA-1301 / DSM 18059 / JW/NM-WN-LF) protein is Flagellar assembly factor FliW.